The following is a 259-amino-acid chain: Formate channel BtFdhC (259 aa).

At 1–26 the chain is on the cytoplasmic side; sequence MAFHKPEQIAELVIEAGVQKVSQTLP. A helical transmembrane segment spans residues 27–47; it reads AMLILGFLGGAFISLGFLLNI. Residues 48–66 lie on the Periplasmic side of the membrane; the sequence is RVLGNLPERWGSLVNVLGG. A helical membrane pass occupies residues 67-97; sequence AVFPVGLMLVVLAGGELITGNMMSLSMALYA. Over 98-108 the chain is Cytoplasmic; that stretch reads KKITLVSVLNN. Residues 109 to 130 traverse the membrane as a helical segment; sequence WVWITFMNFVGAIFVAYCFGHL. At 131-157 the chain is on the periplasmic side; that stretch reads GGLTEGDYLNKTVAIAEGKLHESFGRT. Residues 158–176 form a helical membrane-spanning segment; it reads LILAIGCNWLVCLALWLAY. At 177 to 187 the chain is on the cytoplasmic side; the sequence is GTSDFVGKIIG. The helical transmembrane segment at 188–216 threads the bilayer; the sequence is IWIPIMAFVVIGFQQVVANMFVISAVIFA. Topologically, residues 217–227 are periplasmic; the sequence is GHLTWMDLARN. Residues 228–250 form a helical membrane-spanning segment; it reads FVPVFIGNVIGGAGFVGFAYFAC. At 251 to 259 the chain is on the cytoplasmic side; that stretch reads YQKQHSNMK.

This sequence belongs to the FNT transporter (TC 1.A.16) family.

Its subcellular location is the cell inner membrane. The catalysed reaction is formate(in) = formate(out). Its function is as follows. Acts as a formate transporter. The protein is Formate channel BtFdhC of Bacillus thuringiensis.